A 794-amino-acid polypeptide reads, in one-letter code: DNA ligase (794 aa).

NAD(+) is bound by residues 35–39 (DAEYD), 84–85 (SL), and glutamate 126. The active-site N6-AMP-lysine intermediate is the lysine 128. Residues arginine 149, glutamate 186, lysine 302, and lysine 326 each coordinate NAD(+). Residues cysteine 420, cysteine 423, cysteine 450, and cysteine 456 each contribute to the Zn(2+) site. Positions 711 to 794 (VEGLPLAGQT…KLFDEHGVAR (84 aa)) constitute a BRCT domain.

This sequence belongs to the NAD-dependent DNA ligase family. LigA subfamily. Mg(2+) serves as cofactor. It depends on Mn(2+) as a cofactor.

It carries out the reaction NAD(+) + (deoxyribonucleotide)n-3'-hydroxyl + 5'-phospho-(deoxyribonucleotide)m = (deoxyribonucleotide)n+m + AMP + beta-nicotinamide D-nucleotide.. DNA ligase that catalyzes the formation of phosphodiester linkages between 5'-phosphoryl and 3'-hydroxyl groups in double-stranded DNA using NAD as a coenzyme and as the energy source for the reaction. It is essential for DNA replication and repair of damaged DNA. The chain is DNA ligase from Pseudomonas aeruginosa (strain UCBPP-PA14).